The following is a 308-amino-acid chain: Transaldolase (308 aa).

Residue Lys-125 is the Schiff-base intermediate with substrate of the active site.

This sequence belongs to the transaldolase family. Type 1 subfamily. Homodimer.

Its subcellular location is the cytoplasm. The catalysed reaction is D-sedoheptulose 7-phosphate + D-glyceraldehyde 3-phosphate = D-erythrose 4-phosphate + beta-D-fructose 6-phosphate. The protein operates within carbohydrate degradation; pentose phosphate pathway; D-glyceraldehyde 3-phosphate and beta-D-fructose 6-phosphate from D-ribose 5-phosphate and D-xylulose 5-phosphate (non-oxidative stage): step 2/3. Functionally, transaldolase is important for the balance of metabolites in the pentose-phosphate pathway. This is Transaldolase from Pseudomonas savastanoi pv. phaseolicola (strain 1448A / Race 6) (Pseudomonas syringae pv. phaseolicola (strain 1448A / Race 6)).